The sequence spans 172 residues: Mitochondrial import inner membrane translocase subunit Tim17-B (172 aa).

Residues Cys-9 and Cys-78 are joined by a disulfide bond. A run of 3 helical transmembrane segments spans residues 17-37 (CGGAFTMGVIGGGVFQAIKGF), 61-77 (QIGGSFAVWGGLFSTID), and 113-133 (VGSAMMGGILLALIEGVGILL). The segment at 146–172 (PFLEDPSQLPPKDGTPAPGYPSYQQYH) is disordered.

Belongs to the Tim17/Tim22/Tim23 family. In terms of assembly, component of the TIM23 complex at least composed of TIMM23, TIMM17 (TIMM17A or TIMM17B) and TIMM50. The complex interacts with the TIMM44 component of the PAM complex and with DNAJC15. Post-translationally, forms one disulfide bond. As to expression, expression is abundant in heart and skeletal muscle, intermediate in brain, and weak in pancreas, placenta, kidney and liver.

The protein resides in the mitochondrion inner membrane. In terms of biological role, essential component of the TIM23 complex, a complex that mediates the translocation of transit peptide-containing proteins across the mitochondrial inner membrane. The chain is Mitochondrial import inner membrane translocase subunit Tim17-B (TIMM17B) from Homo sapiens (Human).